A 229-amino-acid polypeptide reads, in one-letter code: Ribonuclease HII (229 aa).

The RNase H type-2 domain occupies 34-223 (WPVAGADEAG…LRKVEDGPQM (190 aa)). 3 residues coordinate a divalent metal cation: aspartate 40, glutamate 41, and aspartate 131.

The protein belongs to the RNase HII family. It depends on Mn(2+) as a cofactor. Mg(2+) serves as cofactor.

The protein resides in the cytoplasm. The catalysed reaction is Endonucleolytic cleavage to 5'-phosphomonoester.. Endonuclease that specifically degrades the RNA of RNA-DNA hybrids. The protein is Ribonuclease HII of Rhizobium leguminosarum bv. trifolii (strain WSM2304).